Consider the following 51-residue polypeptide: Bacteriocin aureocin A53 (51 aa).

Residue methionine 1 is modified to N-formylmethionine.

It is found in the secreted. Functionally, antibacterial peptide active against a broad range of lactic acid bacteria, L.monocytogenes and many epidemiologically unrelated strains of S.aureus involved in bovine mastitis. This chain is Bacteriocin aureocin A53 (aucA), found in Staphylococcus aureus.